Here is a 427-residue protein sequence, read N- to C-terminus: Glutamate-1-semialdehyde 2,1-aminomutase 2 (427 aa).

Lysine 267 is subject to N6-(pyridoxal phosphate)lysine.

Belongs to the class-III pyridoxal-phosphate-dependent aminotransferase family. HemL subfamily. Homodimer. The cofactor is pyridoxal 5'-phosphate.

It is found in the cytoplasm. It carries out the reaction (S)-4-amino-5-oxopentanoate = 5-aminolevulinate. Its pathway is porphyrin-containing compound metabolism; protoporphyrin-IX biosynthesis; 5-aminolevulinate from L-glutamyl-tRNA(Glu): step 2/2. The protein is Glutamate-1-semialdehyde 2,1-aminomutase 2 of Staphylococcus haemolyticus (strain JCSC1435).